Consider the following 376-residue polypeptide: MNAIPSASSVQTVHVPLGERAYDILIGPGLIARAGAEIASRLKGRKAAVVTDENVAPLYLQALVASLDEAGIASAAVVLPAGEKTKSFEHLMTACDKVLEARVERNDCVIALGGGVIGDLSGFAAGIVRRGVRFVQVPTSLLAQVDSSVGGKTGINSRHGKNLIGVFHQPDLVLADTDVLNTLSEREFRAGYAEVAKYGLIDKPDFFAWLEANWKAVFTGGAARIEAIAASCQAKADVVVADERENGPRALLNLGHTFGHALETATAYDSSRLVHGEGVSIGMVLAHEFSARMNLASPDDARRVERHLQEVGLPTRMSDIPGALPPAETLMDAIAQDKKVKSGKLTFILTRGIGQSFVADDVPASEVISFLREKHP.

NAD(+) is bound by residues 115–119 (GVIGD), 139–140 (TS), K152, and K161. 3 residues coordinate Zn(2+): E194, H256, and H275.

This sequence belongs to the sugar phosphate cyclases superfamily. Dehydroquinate synthase family. Requires Co(2+) as cofactor. The cofactor is Zn(2+). NAD(+) is required as a cofactor.

It is found in the cytoplasm. The enzyme catalyses 7-phospho-2-dehydro-3-deoxy-D-arabino-heptonate = 3-dehydroquinate + phosphate. The protein operates within metabolic intermediate biosynthesis; chorismate biosynthesis; chorismate from D-erythrose 4-phosphate and phosphoenolpyruvate: step 2/7. Catalyzes the conversion of 3-deoxy-D-arabino-heptulosonate 7-phosphate (DAHP) to dehydroquinate (DHQ). The protein is 3-dehydroquinate synthase of Rhizobium leguminosarum bv. trifolii (strain WSM2304).